Here is a 530-residue protein sequence, read N- to C-terminus: Berberine bridge enzyme-like 4 (530 aa).

Residues 1-19 (MKGTLSVLCLVLLVSVLEA) form the signal peptide. A disulfide bridge connects residues C32 and C95. N52 carries N-linked (GlcNAc...) asparagine glycosylation. Residues 73 to 247 (NYRKLLAIVA…LSWKINLVDV (175 aa)) form the FAD-binding PCMH-type domain. Residues 110–172 (HDYEGLSYMS…QTLAFPAGVC (63 aa)) constitute a cross-link (6-(S-cysteinyl)-8alpha-(pros-histidyl)-FAD (His-Cys)). 4 N-linked (GlcNAc...) asparagine glycosylation sites follow: N257, N292, N341, and N441.

This sequence belongs to the oxygen-dependent FAD-linked oxidoreductase family. The cofactor is FAD. In terms of processing, the FAD cofactor is bound via a bicovalent 6-S-cysteinyl, 8alpha-N1-histidyl FAD linkage.

It localises to the secreted. The protein resides in the cell wall. Functionally, probable flavin-dependent oxidoreductase. The polypeptide is Berberine bridge enzyme-like 4 (Arabidopsis thaliana (Mouse-ear cress)).